Here is a 588-residue protein sequence, read N- to C-terminus: Aspartate--tRNA ligase (588 aa).

Glu-174 is an L-aspartate binding site. Positions Gln-198 to Lys-201 are aspartate. L-aspartate is bound at residue Arg-220. ATP is bound by residues Arg-220 to Glu-222 and Gln-229. An L-aspartate-binding site is contributed by His-448. Glu-482 contacts ATP. Arg-489 serves as a coordination point for L-aspartate. Gly-534–Arg-537 contacts ATP.

The protein belongs to the class-II aminoacyl-tRNA synthetase family. Type 1 subfamily. In terms of assembly, homodimer.

Its subcellular location is the cytoplasm. The catalysed reaction is tRNA(Asp) + L-aspartate + ATP = L-aspartyl-tRNA(Asp) + AMP + diphosphate. Functionally, catalyzes the attachment of L-aspartate to tRNA(Asp) in a two-step reaction: L-aspartate is first activated by ATP to form Asp-AMP and then transferred to the acceptor end of tRNA(Asp). The chain is Aspartate--tRNA ligase from Exiguobacterium sibiricum (strain DSM 17290 / CCUG 55495 / CIP 109462 / JCM 13490 / 255-15).